Consider the following 378-residue polypeptide: GTP cyclohydrolase-2 (378 aa).

The tract at residues 1–180 (MEEVSSHVKS…IKDMIEFRIK (180 aa)) is DHBP synthase-like. The interval 181-378 (SEKIVERVIE…KMGHLICFND (198 aa)) is GTP cyclohydrolase II. Residue 229 to 233 (RIHSE) coordinates GTP. Zn(2+) is bound by residues Cys-234, Cys-245, and Cys-247. GTP is bound by residues Gln-250, 273-275 (EGR), and Thr-295. The active-site Proton acceptor is the Asp-307. Arg-309 serves as the catalytic Nucleophile. GTP-binding residues include Thr-330 and Lys-335.

In the N-terminal section; belongs to the DHBP synthase family. It in the C-terminal section; belongs to the GTP cyclohydrolase II family. The cofactor is Zn(2+).

The catalysed reaction is GTP + 4 H2O = 2,5-diamino-6-hydroxy-4-(5-phosphoribosylamino)-pyrimidine + formate + 2 phosphate + 3 H(+). It participates in cofactor biosynthesis; riboflavin biosynthesis; 5-amino-6-(D-ribitylamino)uracil from GTP: step 1/4. Its function is as follows. Catalyzes the conversion of GTP to 2,5-diamino-6-ribosylamino-4(3H)-pyrimidinone 5'-phosphate (DARP), formate and pyrophosphate. The chain is GTP cyclohydrolase-2 (ribA) from Archaeoglobus fulgidus (strain ATCC 49558 / DSM 4304 / JCM 9628 / NBRC 100126 / VC-16).